The primary structure comprises 273 residues: Dermonecrotic toxin LhSicTox-alphaIA2ai (273 aa).

Residue histidine 5 is part of the active site. Glutamate 25 and aspartate 27 together coordinate Mg(2+). Residue histidine 41 is the Nucleophile of the active site. 2 cysteine pairs are disulfide-bonded: cysteine 45–cysteine 51 and cysteine 47–cysteine 190. Aspartate 85 contributes to the Mg(2+) binding site.

It belongs to the arthropod phospholipase D family. Class II subfamily. It depends on Mg(2+) as a cofactor. Expressed by the venom gland.

The protein resides in the secreted. It catalyses the reaction an N-(acyl)-sphingosylphosphocholine = an N-(acyl)-sphingosyl-1,3-cyclic phosphate + choline. The catalysed reaction is an N-(acyl)-sphingosylphosphoethanolamine = an N-(acyl)-sphingosyl-1,3-cyclic phosphate + ethanolamine. It carries out the reaction a 1-acyl-sn-glycero-3-phosphocholine = a 1-acyl-sn-glycero-2,3-cyclic phosphate + choline. The enzyme catalyses a 1-acyl-sn-glycero-3-phosphoethanolamine = a 1-acyl-sn-glycero-2,3-cyclic phosphate + ethanolamine. Its function is as follows. Dermonecrotic toxins cleave the phosphodiester linkage between the phosphate and headgroup of certain phospholipids (sphingolipid and lysolipid substrates), forming an alcohol (often choline) and a cyclic phosphate. This toxin acts on sphingomyelin (SM). It may also act on ceramide phosphoethanolamine (CPE), lysophosphatidylcholine (LPC) and lysophosphatidylethanolamine (LPE), but not on lysophosphatidylserine (LPS), and lysophosphatidylglycerol (LPG). It acts by transphosphatidylation, releasing exclusively cyclic phosphate products as second products. Induces dermonecrosis, hemolysis, increased vascular permeability, edema, inflammatory response, and platelet aggregation. In Loxosceles hirsuta (Recluse spider), this protein is Dermonecrotic toxin LhSicTox-alphaIA2ai.